We begin with the raw amino-acid sequence, 211 residues long: Glycerol-3-phosphate acyltransferase 2 (211 aa).

The next 5 membrane-spanning stretches (helical) occupy residues 6–26 (FASLFILAYLLGSFPAGVVVG), 57–77 (IIVFLIDFFKGTLATLIPVIF), 82–102 (HYLCLIFGLVAILGHAFPIFL), 124–144 (FFLICAVIFIPILFITSMVSL), and 148–168 (ISVVLIFIASFFFHDIALSII).

This sequence belongs to the PlsY family. In terms of assembly, probably interacts with PlsX.

It localises to the cell membrane. It carries out the reaction an acyl phosphate + sn-glycerol 3-phosphate = a 1-acyl-sn-glycero-3-phosphate + phosphate. The protein operates within lipid metabolism; phospholipid metabolism. Its function is as follows. Catalyzes the transfer of an acyl group from acyl-phosphate (acyl-PO(4)) to glycerol-3-phosphate (G3P) to form lysophosphatidic acid (LPA). This enzyme utilizes acyl-phosphate as fatty acyl donor, but not acyl-CoA or acyl-ACP. This is Glycerol-3-phosphate acyltransferase 2 from Lactobacillus acidophilus (strain ATCC 700396 / NCK56 / N2 / NCFM).